Reading from the N-terminus, the 185-residue chain is Jasmonate-induced protein homolog (185 aa).

Belongs to the jasmonate-induced protein family.

In Atriplex canescens (Fourwing saltbush), this protein is Jasmonate-induced protein homolog.